The chain runs to 90 residues: Signal recognition particle 19 kDa protein (90 aa).

This sequence belongs to the SRP19 family. Part of the signal recognition particle protein translocation system, which is composed of SRP and FtsY. Archaeal SRP consists of a 7S RNA molecule of 300 nucleotides and two protein subunits: SRP54 and SRP19.

It is found in the cytoplasm. Its function is as follows. Involved in targeting and insertion of nascent membrane proteins into the cytoplasmic membrane. Binds directly to 7S RNA and mediates binding of the 54 kDa subunit of the SRP. The protein is Signal recognition particle 19 kDa protein of Methanococcus aeolicus (strain ATCC BAA-1280 / DSM 17508 / OCM 812 / Nankai-3).